Consider the following 219-residue polypeptide: tRNA (guanine-N(7)-)-methyltransferase (219 aa).

Glutamate 46, glutamate 71, asparagine 100, and aspartate 122 together coordinate S-adenosyl-L-methionine. Residue aspartate 122 is part of the active site. Residues lysine 126, aspartate 158, and 199-202 each bind substrate; that span reads TEYE.

Belongs to the class I-like SAM-binding methyltransferase superfamily. TrmB family.

The enzyme catalyses guanosine(46) in tRNA + S-adenosyl-L-methionine = N(7)-methylguanosine(46) in tRNA + S-adenosyl-L-homocysteine. It functions in the pathway tRNA modification; N(7)-methylguanine-tRNA biosynthesis. In terms of biological role, catalyzes the formation of N(7)-methylguanine at position 46 (m7G46) in tRNA. The sequence is that of tRNA (guanine-N(7)-)-methyltransferase from Leuconostoc mesenteroides subsp. mesenteroides (strain ATCC 8293 / DSM 20343 / BCRC 11652 / CCM 1803 / JCM 6124 / NCDO 523 / NBRC 100496 / NCIMB 8023 / NCTC 12954 / NRRL B-1118 / 37Y).